The primary structure comprises 314 residues: Methionyl-tRNA formyltransferase (314 aa).

113-116 (SLLP) contacts (6S)-5,6,7,8-tetrahydrofolate.

This sequence belongs to the Fmt family.

It catalyses the reaction L-methionyl-tRNA(fMet) + (6R)-10-formyltetrahydrofolate = N-formyl-L-methionyl-tRNA(fMet) + (6S)-5,6,7,8-tetrahydrofolate + H(+). In terms of biological role, attaches a formyl group to the free amino group of methionyl-tRNA(fMet). The formyl group appears to play a dual role in the initiator identity of N-formylmethionyl-tRNA by promoting its recognition by IF2 and preventing the misappropriation of this tRNA by the elongation apparatus. The sequence is that of Methionyl-tRNA formyltransferase from Serratia proteamaculans (strain 568).